The chain runs to 216 residues: Probable GTP-binding protein EngB (216 aa).

Residues 24 to 205 enclose the EngB-type G domain; sequence QTPELAFVGR…WARIASAATD (182 aa). Residues 32-39, 59-63, 86-89, 153-156, and 184-186 each bind GTP; these read GRSNVGKS, GRTRA, DLPG, TKMD, and FSA. Mg(2+)-binding residues include Ser-39 and Thr-61.

It belongs to the TRAFAC class TrmE-Era-EngA-EngB-Septin-like GTPase superfamily. EngB GTPase family. Requires Mg(2+) as cofactor.

Its function is as follows. Necessary for normal cell division and for the maintenance of normal septation. This Anaeromyxobacter sp. (strain Fw109-5) protein is Probable GTP-binding protein EngB.